Here is a 137-residue protein sequence, read N- to C-terminus: Flavodoxin (137 aa).

Residues 2 to 137 (VEIVYWSGTG…KELGEAAAKA (136 aa)) enclose the Flavodoxin-like domain.

Belongs to the flavodoxin family. FMN is required as a cofactor.

Its function is as follows. Low-potential electron donor to a number of redox enzymes. The sequence is that of Flavodoxin from Megasphaera elsdenii.